The sequence spans 956 residues: Glutamate receptor ionotropic, kainate 4 (956 aa).

The signal sequence occupies residues Met1–Cys20. Topologically, residues Ser21–Pro545 are extracellular. 8 N-linked (GlcNAc...) asparagine glycosylation sites follow: Asn158, Asn220, Asn272, Asn286, Asn323, Asn408, Asn415, and Asn479. The L-glutamate site is built by Gly500, Thr502, and Arg507. Residues Gly546–Ala566 traverse the membrane as a helical segment. Topologically, residues Arg567 to Gly623 are cytoplasmic. A helical membrane pass occupies residues Val624 to Leu644. At Thr645 to Asn804 the chain is on the extracellular side. L-glutamate is bound by residues Ser674, Ser675, and Glu723. Asn736 is a glycosylation site (N-linked (GlcNAc...) asparagine). Residues Ile805 to Leu825 form a helical membrane-spanning segment. Topologically, residues Glu826–Glu956 are cytoplasmic. 2 disordered regions span residues Arg863–Asn889 and Leu931–Glu956. Positions Arg939–Lys948 are enriched in basic and acidic residues.

Belongs to the glutamate-gated ion channel (TC 1.A.10.1) family. GRIK4 subfamily. In terms of assembly, homodimer. Can form functional heteromeric receptors with GRIK1, GRIK2 and GRIK3.

The protein localises to the cell membrane. Its subcellular location is the postsynaptic cell membrane. It localises to the presynaptic cell membrane. Functionally, ionotropic glutamate receptor that functions as a cation-permeable ligand-gated ion channel. Cannot form functional channels on its own. Shows channel activity only in heteromeric assembly with GRIK1, GRIK2 and GRIK3 subunits. This chain is Glutamate receptor ionotropic, kainate 4 (GRIK4), found in Homo sapiens (Human).